The primary structure comprises 970 residues: Type III restriction-modification enzyme EcoPI Res subunit (970 aa).

The helicase-like domain stretch occupies residues 75–540; the sequence is ARSNVIDVSM…EVGRGLRLPV (466 aa). Residues 894-918 are endonuclease domain; the sequence is TYSPDFAYVVKTAEGDYLNFIIETK.

It belongs to the type III restriction-modification system Res protein family. In terms of assembly, a heterotetramer with stoichiometry Res(2)Mod(2). Mg(2+) is required as a cofactor. It depends on S-adenosyl-L-methionine as a cofactor.

It carries out the reaction Endonucleolytic cleavage of DNA to give specific double-stranded fragments with terminal 5'-phosphates.. Functionally, a type III restriction enzyme that recognizes 2 inversely oriented double-stranded sequences 5'-AGACC-3' and cleaves DNA 25-27 base pairs downstream of one site, producing a single-strand 5' protrusion of two nucleotides. DNA restriction requires both the Res and Mod subunits. DNA topology affects its action; relaxed and negatively supercoiled DNA are digested but positively supercoiled DNA is not a good substrate. After binding to one recognition site undergoes random one-dimensional diffusion along DNA until it collides with a stationary enzyme bound to the second DNA site, which is when DNA cleavage occurs. The chain is Type III restriction-modification enzyme EcoPI Res subunit from Enterobacteriaceae (Bacteriophage P1).